The sequence spans 348 residues: Dihydroorotase (348 aa).

The Zn(2+) site is built by H17 and H19. Substrate is bound by residues 19–21 (HLR) and N45. Positions 103, 140, and 178 each coordinate Zn(2+). The residue at position 103 (K103) is an N6-carboxylysine. Position 140 (H140) interacts with substrate. L223 contacts substrate. D251 provides a ligand contact to Zn(2+). Residue D251 is part of the active site. Positions 255 and 267 each coordinate substrate.

Belongs to the metallo-dependent hydrolases superfamily. DHOase family. Class II DHOase subfamily. In terms of assembly, homodimer. Zn(2+) serves as cofactor.

The catalysed reaction is (S)-dihydroorotate + H2O = N-carbamoyl-L-aspartate + H(+). It functions in the pathway pyrimidine metabolism; UMP biosynthesis via de novo pathway; (S)-dihydroorotate from bicarbonate: step 3/3. Functionally, catalyzes the reversible cyclization of carbamoyl aspartate to dihydroorotate. This is Dihydroorotase from Salmonella agona (strain SL483).